A 379-amino-acid chain; its full sequence is Beta sliding clamp (379 aa).

It belongs to the beta sliding clamp family. In terms of assembly, forms a ring-shaped head-to-tail homodimer around DNA which binds and tethers DNA polymerases and other proteins to the DNA. The DNA replisome complex has a single clamp-loading complex (3 tau and 1 each of delta, delta', psi and chi subunits) which binds 3 Pol III cores (1 core on the leading strand and 2 on the lagging strand) each with a beta sliding clamp dimer. Additional proteins in the replisome are other copies of gamma, psi and chi, Ssb, DNA helicase and RNA primase.

Its subcellular location is the cytoplasm. Confers DNA tethering and processivity to DNA polymerases and other proteins. Acts as a clamp, forming a ring around DNA (a reaction catalyzed by the clamp-loading complex) which diffuses in an ATP-independent manner freely and bidirectionally along dsDNA. Initially characterized for its ability to contact the catalytic subunit of DNA polymerase III (Pol III), a complex, multichain enzyme responsible for most of the replicative synthesis in bacteria; Pol III exhibits 3'-5' exonuclease proofreading activity. The beta chain is required for initiation of replication as well as for processivity of DNA replication. In Rickettsia bellii (strain RML369-C), this protein is Beta sliding clamp (dnaN).